The following is a 292-amino-acid chain: Ribosomal protein L11 methyltransferase (292 aa).

The S-adenosyl-L-methionine site is built by Thr145, Gly166, Asp188, and Asn229.

The protein belongs to the methyltransferase superfamily. PrmA family.

The protein localises to the cytoplasm. It catalyses the reaction L-lysyl-[protein] + 3 S-adenosyl-L-methionine = N(6),N(6),N(6)-trimethyl-L-lysyl-[protein] + 3 S-adenosyl-L-homocysteine + 3 H(+). Functionally, methylates ribosomal protein L11. This chain is Ribosomal protein L11 methyltransferase, found in Pseudoalteromonas atlantica (strain T6c / ATCC BAA-1087).